A 144-amino-acid polypeptide reads, in one-letter code: MRLNTLSPADGSKHAPKRLGRGIGSGLGKTGGRGHKGQNSRSGGGVRRGFEGGQMPLYRRLPKFGFTSRKAMVTAEVRLSDLAKVEGGIVDLNTLKAANIIGIQMEFAKVILSGEVSAPVTIRGLRVTKGARAAIEAAGGKIEE.

Residues 1-53 are disordered; it reads MRLNTLSPADGSKHAPKRLGRGIGSGLGKTGGRGHKGQNSRSGGGVRRGFEGG. The segment covering 21-31 has biased composition (gly residues); sequence RGIGSGLGKTG.

This sequence belongs to the universal ribosomal protein uL15 family. As to quaternary structure, part of the 50S ribosomal subunit.

Its function is as follows. Binds to the 23S rRNA. This is Large ribosomal subunit protein uL15 from Erwinia tasmaniensis (strain DSM 17950 / CFBP 7177 / CIP 109463 / NCPPB 4357 / Et1/99).